A 325-amino-acid polypeptide reads, in one-letter code: Foldase protein PrsA (325 aa).

The signal sequence occupies residues 1-20 (MKLMNKIIVPVTASALLLGA). Cysteine 21 carries the N-palmitoyl cysteine lipid modification. Cysteine 21 carries the S-diacylglycerol cysteine lipid modification. A PpiC domain is found at 139 to 245 (ENSKKASHIL…YGYHIIKADK (107 aa)). 2 disordered regions span residues 159–202 (EGLS…KKDG) and 303–325 (PDKI…NSGS).

It belongs to the PrsA family.

It is found in the cell membrane. It catalyses the reaction [protein]-peptidylproline (omega=180) = [protein]-peptidylproline (omega=0). Its function is as follows. Plays a major role in protein secretion by helping the post-translocational extracellular folding of several secreted proteins. The protein is Foldase protein PrsA of Staphylococcus epidermidis (strain ATCC 12228 / FDA PCI 1200).